Here is a 164-residue protein sequence, read N- to C-terminus: 3-hydroxyacyl-[acyl-carrier-protein] dehydratase FabZ (164 aa).

Residue histidine 61 is part of the active site.

It belongs to the thioester dehydratase family. FabZ subfamily.

It localises to the cytoplasm. The catalysed reaction is a (3R)-hydroxyacyl-[ACP] = a (2E)-enoyl-[ACP] + H2O. Its function is as follows. Involved in unsaturated fatty acids biosynthesis. Catalyzes the dehydration of short chain beta-hydroxyacyl-ACPs and long chain saturated and unsaturated beta-hydroxyacyl-ACPs. The sequence is that of 3-hydroxyacyl-[acyl-carrier-protein] dehydratase FabZ from Ralstonia nicotianae (strain ATCC BAA-1114 / GMI1000) (Ralstonia solanacearum).